The sequence spans 493 residues: Xaa-Pro dipeptidase (493 aa).

An N-acetylalanine modification is found at Ala-2. Phosphoserine is present on Ser-167. Residue His-255 participates in a dipeptide binding. Residues Asp-276, Asp-287, and His-370 each contribute to the Mn(2+) site. Asp-287 provides a ligand contact to a dipeptide. Residues His-377 and Arg-398 each coordinate a dipeptide. Glu-412 and Glu-452 together coordinate Mn(2+).

The protein belongs to the peptidase M24B family. Eukaryotic-type prolidase subfamily. In terms of assembly, homodimer. Requires Mn(2+) as cofactor.

The catalysed reaction is Xaa-L-Pro dipeptide + H2O = an L-alpha-amino acid + L-proline. Specifically inhibited by the pseudodipeptide CQ31. Inhibition by CQ31 indirectly activates the CARD8 inflammasome: dipeptide accumulation following PEPD inactivation weaky inhibit dipeptidyl peptidases DDP8 and DPP9, relieving DPP8- and/or DPP9-mediated inhibition of CARD8. In terms of biological role, dipeptidase that catalyzes the hydrolysis of dipeptides with a prolyl (Xaa-Pro) or hydroxyprolyl residue in the C-terminal position. The preferred dipeptide substrate is Gly-Pro, but other Xaa-Pro dipeptides, such as Ala-Pro, Met-Pro, Phe-Pro, Val-Pro and Leu-Pro, can be cleaved. Plays an important role in collagen metabolism because the high level of iminoacids in collagen. This Homo sapiens (Human) protein is Xaa-Pro dipeptidase.